We begin with the raw amino-acid sequence, 280 residues long: Tritrans,polycis-undecaprenyl-diphosphate synthase (geranylgeranyl-diphosphate specific) (280 aa).

D57 is a catalytic residue. D57 is a Mg(2+) binding site. Residues 58-61 (GNRR), R70, H74, and 102-104 (STE) contribute to the substrate site. N105 functions as the Proton acceptor in the catalytic mechanism. Substrate is bound by residues F106, R108, R229, and 235-237 (RIS). E248 contacts Mg(2+).

It belongs to the UPP synthase family. Homodimer. Mg(2+) is required as a cofactor.

The enzyme catalyses geranylgeranyl diphosphate + 7 isopentenyl diphosphate = tri-trans,hepta-cis-undecaprenyl diphosphate + 7 diphosphate. Functionally, catalyzes the sequential condensation of isopentenyl diphosphate (IPP) with geranylgeranyl diphosphate (GGPP) to yield (2Z,6Z,10Z,14Z,18Z,22Z,26Z,30E,34E,38E)-undecaprenyl diphosphate (tritrans,heptacis-UPP). It is probably the precursor of glycosyl carrier lipids. The chain is Tritrans,polycis-undecaprenyl-diphosphate synthase (geranylgeranyl-diphosphate specific) from Methanocaldococcus jannaschii (strain ATCC 43067 / DSM 2661 / JAL-1 / JCM 10045 / NBRC 100440) (Methanococcus jannaschii).